The following is a 241-amino-acid chain: MSLLSAIDTSAASVYQPAQLLNWVYLSLQDTHQASAFDAFRPEPTAGAAPPELAFGKGRPEQLGSPLHSSYLNSFFQLQRGEALSNSVYKGASPYGSLNNIADGLSSLTEHFSDLTLTSEARKPSKRPPPNYLCHLCFNKGHYIKDCPQARPKGEGLTPYQGKKRCFGEYKCPKCKRKWMSGNSWANMGQECIKCHINVYPHKQRPLEKPDGLDVSDQSKEHPQHLCEECKVLGYYCRRVQ.

2 positions are modified to phosphoserine: Ser-65 and Ser-93. Residues 132 to 149 form a CCHC-type zinc finger; sequence YLCHLCFNKGHYIKDCPQ.

The chain is Zinc finger CCHC domain-containing protein 24 (ZCCHC24) from Macaca fascicularis (Crab-eating macaque).